The sequence spans 310 residues: Methionyl-tRNA formyltransferase (310 aa).

Position 109 to 112 (109 to 112 (SLLP)) interacts with (6S)-5,6,7,8-tetrahydrofolate.

It belongs to the Fmt family.

The catalysed reaction is L-methionyl-tRNA(fMet) + (6R)-10-formyltetrahydrofolate = N-formyl-L-methionyl-tRNA(fMet) + (6S)-5,6,7,8-tetrahydrofolate + H(+). In terms of biological role, attaches a formyl group to the free amino group of methionyl-tRNA(fMet). The formyl group appears to play a dual role in the initiator identity of N-formylmethionyl-tRNA by promoting its recognition by IF2 and preventing the misappropriation of this tRNA by the elongation apparatus. The polypeptide is Methionyl-tRNA formyltransferase (Macrococcus caseolyticus (strain JCSC5402) (Macrococcoides caseolyticum)).